The following is a 447-amino-acid chain: Chordin-like protein 1 (447 aa).

Residues 1–22 (MDGMKYIISLFFIFVFLEGSKT) form the signal peptide. VWFC domains are found at residues 30–95 (TYCV…PRCP) and 108–174 (KSCE…RVCR). N-linked (GlcNAc...) asparagine glycosylation is present at Asn-113. A Cell attachment site motif is present at residues 174–176 (RGD). A disordered region spans residues 200–224 (SYLRSPYDPPPNRQAGGLPRFPGSR). Residues 253–318 (QVCVSNGKTY…IDGKCCKVCP (66 aa)) form the VWFC 3 domain. N-linked (GlcNAc...) asparagine glycosylation is present at Asn-286.

May be glycosylated. In terms of tissue distribution, expressed in heart, brain, lung, liver, kidney and testis.

The protein localises to the secreted. Its function is as follows. Seems to antagonize the function of BMP4 by binding to it and preventing its interaction with receptors. Alters the fate commitment of neural stem cells from gliogenesis to neurogenesis. Contributes to neuronal differentiation of neural stem cells in the brain by preventing the adoption of a glial fate. May play a crucial role in dorsoventral axis formation. Antagonizes the function of BMP7 and may thus play an important role in the embryonic bone formation. Shows no inhibitory effect on the inducing activity of BMP2. Plays a role during anterior segment eye development. This chain is Chordin-like protein 1 (Chrdl1), found in Mus musculus (Mouse).